Here is a 599-residue protein sequence, read N- to C-terminus: Adenine deaminase (599 aa).

It belongs to the metallo-dependent hydrolases superfamily. Adenine deaminase family. Mn(2+) is required as a cofactor.

It carries out the reaction adenine + H2O + H(+) = hypoxanthine + NH4(+). This chain is Adenine deaminase, found in Clostridium botulinum (strain ATCC 19397 / Type A).